Reading from the N-terminus, the 425-residue chain is GTPase Obg (425 aa).

The 158-residue stretch at 1 to 158 (MFRDSAKIYV…YSLILEMKMI (158 aa)) folds into the Obg domain. The OBG-type G domain occupies 159 to 330 (ADVGLVGYPN…LLYAVSETLK (172 aa)). GTP-binding positions include 165–172 (GYPNVGKS), 190–194 (FTTLV), 212–215 (DIPG), 282–285 (NKMD), and 311–313 (SAA). Residues S172 and T192 each contribute to the Mg(2+) site. Positions 348 to 425 (YKVQEEKPFE…IYDTEFDYTR (78 aa)) constitute an OCT domain.

The protein belongs to the TRAFAC class OBG-HflX-like GTPase superfamily. OBG GTPase family. As to quaternary structure, monomer. It depends on Mg(2+) as a cofactor.

It is found in the cytoplasm. In terms of biological role, an essential GTPase which binds GTP, GDP and possibly (p)ppGpp with moderate affinity, with high nucleotide exchange rates and a fairly low GTP hydrolysis rate. Plays a role in control of the cell cycle, stress response, ribosome biogenesis and in those bacteria that undergo differentiation, in morphogenesis control. This Ruminiclostridium cellulolyticum (strain ATCC 35319 / DSM 5812 / JCM 6584 / H10) (Clostridium cellulolyticum) protein is GTPase Obg.